A 223-amino-acid polypeptide reads, in one-letter code: Translation initiation factor 6 (223 aa).

Belongs to the eIF-6 family.

Binds to the 50S ribosomal subunit and prevents its association with the 30S ribosomal subunit to form the 70S initiation complex. In Saccharolobus islandicus (strain Y.N.15.51 / Yellowstone #2) (Sulfolobus islandicus), this protein is Translation initiation factor 6.